The sequence spans 101 residues: Chaperone modulatory protein CbpM (101 aa).

It belongs to the CbpM family.

Functionally, interacts with CbpA and inhibits both the DnaJ-like co-chaperone activity and the DNA binding activity of CbpA. Together with CbpA, modulates the activity of the DnaK chaperone system. Does not inhibit the co-chaperone activity of DnaJ. The sequence is that of Chaperone modulatory protein CbpM from Salmonella arizonae (strain ATCC BAA-731 / CDC346-86 / RSK2980).